The primary structure comprises 209 residues: N-(5'-phosphoribosyl)anthranilate isomerase (209 aa).

The protein belongs to the TrpF family.

The enzyme catalyses N-(5-phospho-beta-D-ribosyl)anthranilate = 1-(2-carboxyphenylamino)-1-deoxy-D-ribulose 5-phosphate. The protein operates within amino-acid biosynthesis; L-tryptophan biosynthesis; L-tryptophan from chorismate: step 3/5. This Granulibacter bethesdensis (strain ATCC BAA-1260 / CGDNIH1) protein is N-(5'-phosphoribosyl)anthranilate isomerase.